The chain runs to 310 residues: 4-diphosphocytidyl-2-C-methyl-D-erythritol kinase (310 aa).

K11 is an active-site residue. Residue 95 to 105 coordinates ATP; it reads PIGAGLAGGSA. D137 is an active-site residue.

It belongs to the GHMP kinase family. IspE subfamily.

The enzyme catalyses 4-CDP-2-C-methyl-D-erythritol + ATP = 4-CDP-2-C-methyl-D-erythritol 2-phosphate + ADP + H(+). It participates in isoprenoid biosynthesis; isopentenyl diphosphate biosynthesis via DXP pathway; isopentenyl diphosphate from 1-deoxy-D-xylulose 5-phosphate: step 3/6. Catalyzes the phosphorylation of the position 2 hydroxy group of 4-diphosphocytidyl-2C-methyl-D-erythritol. This Acaryochloris marina (strain MBIC 11017) protein is 4-diphosphocytidyl-2-C-methyl-D-erythritol kinase.